Reading from the N-terminus, the 507-residue chain is Dihydrolipoyl dehydrogenase 1, mitochondrial (507 aa).

The transit peptide at M1–F36 directs the protein to the mitochondrion. FAD contacts are provided by residues E73 to C82, K91, G155, and T184 to S186. A disulfide bond links C82 and C87. Residues G221–E228, E244, V278, and G313 each bind NAD(+). FAD is bound by residues D354 and M360 to H363. H486 (proton acceptor) is an active-site residue.

It belongs to the class-I pyridine nucleotide-disulfide oxidoreductase family. As to quaternary structure, homodimer. Part of both the glycine cleavage system composed of four proteins: P, T, L and H and of the pyruvate dehydrogenase complex containing multiple copies of three enzymatic components: pyruvate dehydrogenase (E1), dihydrolipoamide acetyltransferase (E2) and lipoamide dehydrogenase (E3). The cofactor is FAD. Post-translationally, S-nytrosylated at unknown positions. Preferentially expressed in leaves, flowers and siliques and at a lower level in roots and stems.

Its subcellular location is the mitochondrion matrix. It carries out the reaction N(6)-[(R)-dihydrolipoyl]-L-lysyl-[protein] + NAD(+) = N(6)-[(R)-lipoyl]-L-lysyl-[protein] + NADH + H(+). Functionally, lipoamide dehydrogenase is a component of the glycine decarboxylase (GDC) or glycine cleavage system as well as of the alpha-ketoacid dehydrogenase complexes. LPD1 is probably the protein most often associated with the glycine decarboxylase complex while LPD2 is probably incorporated into alpha-ketoacid dehydrogenase complexes. The polypeptide is Dihydrolipoyl dehydrogenase 1, mitochondrial (LPD1) (Arabidopsis thaliana (Mouse-ear cress)).